The chain runs to 366 residues: tRNA 2-selenouridine synthase (366 aa).

Residues 12–136 (FLSGTPMMDV…MRGFLIDVIE (125 aa)) form the Rhodanese domain. C95 (S-selanylcysteine intermediate) is an active-site residue.

It belongs to the SelU family. Monomer.

The enzyme catalyses 5-methylaminomethyl-2-thiouridine(34) in tRNA + selenophosphate + (2E)-geranyl diphosphate + H2O + H(+) = 5-methylaminomethyl-2-selenouridine(34) in tRNA + (2E)-thiogeraniol + phosphate + diphosphate. The catalysed reaction is 5-methylaminomethyl-2-thiouridine(34) in tRNA + (2E)-geranyl diphosphate = 5-methylaminomethyl-S-(2E)-geranyl-thiouridine(34) in tRNA + diphosphate. It catalyses the reaction 5-methylaminomethyl-S-(2E)-geranyl-thiouridine(34) in tRNA + selenophosphate + H(+) = 5-methylaminomethyl-2-(Se-phospho)selenouridine(34) in tRNA + (2E)-thiogeraniol. It carries out the reaction 5-methylaminomethyl-2-(Se-phospho)selenouridine(34) in tRNA + H2O = 5-methylaminomethyl-2-selenouridine(34) in tRNA + phosphate. Its function is as follows. Involved in the post-transcriptional modification of the uridine at the wobble position (U34) of tRNA(Lys), tRNA(Glu) and tRNA(Gln). Catalyzes the conversion of 2-thiouridine (S2U-RNA) to 2-selenouridine (Se2U-RNA). Acts in a two-step process involving geranylation of 2-thiouridine (S2U) to S-geranyl-2-thiouridine (geS2U) and subsequent selenation of the latter derivative to 2-selenouridine (Se2U) in the tRNA chain. In Cupriavidus pinatubonensis (strain JMP 134 / LMG 1197) (Cupriavidus necator (strain JMP 134)), this protein is tRNA 2-selenouridine synthase.